Here is a 344-residue protein sequence, read N- to C-terminus: Probable magnesium transporter NIPA9 (344 aa).

Residues 1–46 are Cytoplasmic-facing; the sequence is MWESICLTLAATAGNNIGKVLQKKGTIILPPLSLKLKVLRAYAENK. Transmembrane regions (helical) follow at residues 47-67 and 68-88; these read PWAL…RALS and LAPV…LSVF. Residues 89 to 98 lie on the Cytoplasmic side of the membrane; the sequence is SHFYLKEVMN. Residues 99–119 traverse the membrane as a helical segment; it reads VFDWIGITVAGIGTIGVGAGG. Topologically, residues 120 to 125 are extracellular; the sequence is EEQEAS. The chain crosses the membrane as a helical span at residues 126–146; it reads LISVFQLLWLALVVAILFVLL. At 147-166 the chain is on the cytoplasmic side; it reads NAWLHIFKRQRREQELGEYE. A helical membrane pass occupies residues 167-187; the sequence is VVEEIIYGLESGILFGMASVV. At 188-191 the chain is on the extracellular side; sequence SKMG. The helical transmembrane segment at 192 to 212 threads the bilayer; it reads FVFVEQGFSTMFIPMCISISI. Over 213–231 the chain is Cytoplasmic; it reads CCSGTGFFYQTRGLKHGRA. The helical transmembrane segment at 232–252 threads the bilayer; that stretch reads IVVSTCAAVASIVTGVVAGMF. At 253–265 the chain is on the extracellular side; that stretch reads ALGEKLPTSPSGR. The chain crosses the membrane as a helical span at residues 266–286; it reads LLLLLGWLLIMLGVVLLVTSS. The Cytoplasmic segment spans residues 287-344; sequence RLIRHLPRSFRRSRQTSLERGFNIRRTTSHTPKDTNPSAVIQAATLHHLLSSPSKDKD.

Belongs to the NIPA (TC 2.A.7) family. Homodimer.

It is found in the cell membrane. The protein localises to the early endosome. Acts as a Mg(2+) transporter. Can also transport other divalent cations such as Fe(2+), Sr(2+), Ba(2+), Mn(2+) and Co(2+) but to a much less extent than Mg(2+). This Arabidopsis thaliana (Mouse-ear cress) protein is Probable magnesium transporter NIPA9.